The following is a 162-amino-acid chain: Endoribonuclease YbeY (162 aa).

Positions 118, 122, and 128 each coordinate Zn(2+).

It belongs to the endoribonuclease YbeY family. Requires Zn(2+) as cofactor.

The protein localises to the cytoplasm. Functionally, single strand-specific metallo-endoribonuclease involved in late-stage 70S ribosome quality control and in maturation of the 3' terminus of the 16S rRNA. The protein is Endoribonuclease YbeY of Glaesserella parasuis serovar 5 (strain SH0165) (Haemophilus parasuis).